The primary structure comprises 176 residues: Probable RNA-binding protein EIF1AD (176 aa).

Positions 5–89 (TKKRYITNKV…VKGEIEYILD (85 aa)) constitute an S1-like domain. The segment covering 117-128 (AKRGKANDKMID) has biased composition (basic and acidic residues). Positions 117–176 (AKRGKANDKMIDDDMLPPSESEEEDDESEDEIEDTYDEDEETDDEEFDTYNPNRMQAPSK) are disordered. The span at 129–164 (DDMLPPSESEEEDDESEDEIEDTYDEDEETDDEEFD) shows a compositional bias: acidic residues. Positions 166 to 176 (YNPNRMQAPSK) are enriched in polar residues.

This sequence belongs to the EIF1AD family.

This is Probable RNA-binding protein EIF1AD from Caenorhabditis briggsae.